We begin with the raw amino-acid sequence, 78 residues long: Small integral membrane protein 5 (78 aa).

A helical transmembrane segment spans residues 32–52 (ILAFSVLVVFTATVVLLLLIA).

Its subcellular location is the membrane. The chain is Small integral membrane protein 5 (SMIM5) from Bos taurus (Bovine).